The chain runs to 93 residues: UPF0367 protein tsr0804 (93 aa).

It belongs to the UPF0367 family.

This is UPF0367 protein tsr0804 from Thermosynechococcus vestitus (strain NIES-2133 / IAM M-273 / BP-1).